The sequence spans 281 residues: Probable feruloyl esterase A (281 aa).

A signal peptide spans 1–21 (MKNFVSMHAILLACSAGAGLA). Cystine bridges form between Cys50–Cys279, Cys112–Cys115, and Cys248–Cys255. Residue Asp98 coordinates substrate. Asn100 carries N-linked (GlcNAc...) asparagine glycosylation. Position 101 (Tyr101) interacts with substrate. The active-site Nucleophile is Ser154. Residue Asn173 is glycosylated (N-linked (GlcNAc...) asparagine). Catalysis depends on Asp215, which acts as the Charge relay system. Position 268 (His268) interacts with substrate. His268 acts as the Charge relay system in catalysis.

The protein belongs to the AB hydrolase superfamily. FaeA family.

The protein localises to the secreted. The catalysed reaction is feruloyl-polysaccharide + H2O = ferulate + polysaccharide.. In terms of biological role, involved in degradation of plant cell walls. Hydrolyzes the feruloyl-arabinose ester bond in arabinoxylans, and the feruloyl-galactose ester bond in pectin. This chain is Probable feruloyl esterase A (faeA), found in Aspergillus flavus (strain ATCC 200026 / FGSC A1120 / IAM 13836 / NRRL 3357 / JCM 12722 / SRRC 167).